The following is a 404-amino-acid chain: S-adenosylmethionine synthase (404 aa).

Over residues 1–13 (MSHSRYFFTSESV) the composition is skewed to polar residues. The segment at 1–20 (MSHSRYFFTSESVSEGHPDK) is disordered. His17 serves as a coordination point for ATP. Position 19 (Asp19) interacts with Mg(2+). Glu45 is a binding site for K(+). The L-methionine site is built by Glu58 and Gln101. Residues 101-111 (QSPDINRGVDR) are flexible loop. Residues 172-174 (DSK), 246-247 (RF), Asp255, 261-262 (RK), Ala278, and Lys282 each bind ATP. Asp255 provides a ligand contact to L-methionine. Lys286 contributes to the L-methionine binding site.

It belongs to the AdoMet synthase family. Homotetramer; dimer of dimers. Mg(2+) is required as a cofactor. Requires K(+) as cofactor.

It localises to the cytoplasm. The enzyme catalyses L-methionine + ATP + H2O = S-adenosyl-L-methionine + phosphate + diphosphate. Its pathway is amino-acid biosynthesis; S-adenosyl-L-methionine biosynthesis; S-adenosyl-L-methionine from L-methionine: step 1/1. Functionally, catalyzes the formation of S-adenosylmethionine (AdoMet) from methionine and ATP. The overall synthetic reaction is composed of two sequential steps, AdoMet formation and the subsequent tripolyphosphate hydrolysis which occurs prior to release of AdoMet from the enzyme. This is S-adenosylmethionine synthase from Chlorobaculum parvum (strain DSM 263 / NCIMB 8327) (Chlorobium vibrioforme subsp. thiosulfatophilum).